Consider the following 234-residue polypeptide: ATP synthase subunit a 2 (234 aa).

Transmembrane regions (helical) follow at residues 29–49, 90–110, 116–136, 147–167, 186–206, and 207–227; these read FFQH…VGLL, LIAT…IPGF, SLNT…IVGV, FMGP…IGHL, IVLM…MMLM, and GILV…IYIA.

Belongs to the ATPase A chain family. As to quaternary structure, F-type ATPases have 2 components, CF(1) - the catalytic core - and CF(0) - the membrane proton channel. CF(1) has five subunits: alpha(3), beta(3), gamma(1), delta(1), epsilon(1). CF(0) has three main subunits: a(1), b(2) and c(9-12). The alpha and beta chains form an alternating ring which encloses part of the gamma chain. CF(1) is attached to CF(0) by a central stalk formed by the gamma and epsilon chains, while a peripheral stalk is formed by the delta and b chains.

The protein localises to the cell inner membrane. Key component of the proton channel; it plays a direct role in the translocation of protons across the membrane. In Syntrophotalea carbinolica (strain DSM 2380 / NBRC 103641 / GraBd1) (Pelobacter carbinolicus), this protein is ATP synthase subunit a 2.